The primary structure comprises 811 residues: DNA mismatch repair protein MutS (811 aa).

ATP is bound at residue 583-590; sequence GPNMAGKS.

The protein belongs to the DNA mismatch repair MutS family.

Functionally, this protein is involved in the repair of mismatches in DNA. It is possible that it carries out the mismatch recognition step. This protein has a weak ATPase activity. This Thermus thermophilus (strain ATCC BAA-163 / DSM 7039 / HB27) protein is DNA mismatch repair protein MutS.